Reading from the N-terminus, the 357-residue chain is Holliday junction branch migration complex subunit RuvB (357 aa).

The segment at 4–195 (TDKLAAKAVS…FGIVARLEFY (192 aa)) is large ATPase domain (RuvB-L). Residues L34, R35, G76, K79, T80, T81, 142–144 (EDY), R185, Y195, and R232 contribute to the ATP site. T80 provides a ligand contact to Mg(2+). The tract at residues 196 to 266 (TPAELAKIVT…VADAALAMLD (71 aa)) is small ATPAse domain (RuvB-S). The interval 269–357 (AVGFDLMDRK…PVRDLWDDNQ (89 aa)) is head domain (RuvB-H). Residues R305, R324, and R329 each contribute to the DNA site.

Belongs to the RuvB family. As to quaternary structure, homohexamer. Forms an RuvA(8)-RuvB(12)-Holliday junction (HJ) complex. HJ DNA is sandwiched between 2 RuvA tetramers; dsDNA enters through RuvA and exits via RuvB. An RuvB hexamer assembles on each DNA strand where it exits the tetramer. Each RuvB hexamer is contacted by two RuvA subunits (via domain III) on 2 adjacent RuvB subunits; this complex drives branch migration. In the full resolvosome a probable DNA-RuvA(4)-RuvB(12)-RuvC(2) complex forms which resolves the HJ.

Its subcellular location is the cytoplasm. The enzyme catalyses ATP + H2O = ADP + phosphate + H(+). Functionally, the RuvA-RuvB-RuvC complex processes Holliday junction (HJ) DNA during genetic recombination and DNA repair, while the RuvA-RuvB complex plays an important role in the rescue of blocked DNA replication forks via replication fork reversal (RFR). RuvA specifically binds to HJ cruciform DNA, conferring on it an open structure. The RuvB hexamer acts as an ATP-dependent pump, pulling dsDNA into and through the RuvAB complex. RuvB forms 2 homohexamers on either side of HJ DNA bound by 1 or 2 RuvA tetramers; 4 subunits per hexamer contact DNA at a time. Coordinated motions by a converter formed by DNA-disengaged RuvB subunits stimulates ATP hydrolysis and nucleotide exchange. Immobilization of the converter enables RuvB to convert the ATP-contained energy into a lever motion, pulling 2 nucleotides of DNA out of the RuvA tetramer per ATP hydrolyzed, thus driving DNA branch migration. The RuvB motors rotate together with the DNA substrate, which together with the progressing nucleotide cycle form the mechanistic basis for DNA recombination by continuous HJ branch migration. Branch migration allows RuvC to scan DNA until it finds its consensus sequence, where it cleaves and resolves cruciform DNA. In Ralstonia pickettii (strain 12J), this protein is Holliday junction branch migration complex subunit RuvB.